A 221-amino-acid chain; its full sequence is Probable septum site-determining protein MinC (221 aa).

It belongs to the MinC family. As to quaternary structure, interacts with MinD and FtsZ.

In terms of biological role, cell division inhibitor that blocks the formation of polar Z ring septums. Rapidly oscillates between the poles of the cell to destabilize FtsZ filaments that have formed before they mature into polar Z rings. Prevents FtsZ polymerization. The sequence is that of Probable septum site-determining protein MinC from Shewanella oneidensis (strain ATCC 700550 / JCM 31522 / CIP 106686 / LMG 19005 / NCIMB 14063 / MR-1).